The sequence spans 208 residues: MAEKIPKPVSKRLVSYYMCLERLLDEGVEVVSSEELARRLDLKASQIRKDLSYFGEFGKRGVGYNVEHLYDAIGEILGVKKEWKLVVVGAGNIGRAVSNYAVMREKGFKIVGIFDSDPSKMGKEAAPGLTVSDVSELEKFVEEHGVEIGVIAVPAEHAQEIAERLEKAGIMGILNFAPVKIKVSVPVENIDITASLRVLTFEIVRRNN.

The H-T-H motif DNA-binding region spans Ser-15–Phe-54. An NAD(+)-binding site is contributed by Gly-89–Gly-94.

It belongs to the transcriptional regulatory Rex family. As to quaternary structure, homodimer.

It localises to the cytoplasm. Modulates transcription in response to changes in cellular NADH/NAD(+) redox state. This chain is Redox-sensing transcriptional repressor Rex, found in Thermotoga petrophila (strain ATCC BAA-488 / DSM 13995 / JCM 10881 / RKU-1).